The following is a 512-amino-acid chain: Glutamyl-tRNA(Gln) amidotransferase subunit A (512 aa).

Active-site charge relay system residues include Lys82 and Ser157. The active-site Acyl-ester intermediate is the Ser181.

The protein belongs to the amidase family. GatA subfamily. As to quaternary structure, heterotrimer of A, B and C subunits.

It catalyses the reaction L-glutamyl-tRNA(Gln) + L-glutamine + ATP + H2O = L-glutaminyl-tRNA(Gln) + L-glutamate + ADP + phosphate + H(+). Allows the formation of correctly charged Gln-tRNA(Gln) through the transamidation of misacylated Glu-tRNA(Gln) in organisms which lack glutaminyl-tRNA synthetase. The reaction takes place in the presence of glutamine and ATP through an activated gamma-phospho-Glu-tRNA(Gln). The polypeptide is Glutamyl-tRNA(Gln) amidotransferase subunit A (Bordetella bronchiseptica (strain ATCC BAA-588 / NCTC 13252 / RB50) (Alcaligenes bronchisepticus)).